We begin with the raw amino-acid sequence, 503 residues long: Cytochrome c-552 (503 aa).

The N-terminal stretch at 1-16 (MKKNTIILVGALIAIA) is a signal peptide. H102 contacts heme c. Heme contacts are provided by C130, C133, and K134. Heme c-binding residues include C168, C171, H172, C210, C213, and H214. 4 residues coordinate Ca(2+): E216, Y217, K273, and Q275. Residue Y217 coordinates substrate. Substrate is bound at residue H276. Heme c is bound by residues H287, C294, C297, H298, H312, C325, C328, H329, and H404.

This sequence belongs to the cytochrome c-552 family. The cofactor is Ca(2+). It depends on heme c as a cofactor.

The protein resides in the periplasm. It catalyses the reaction 6 Fe(III)-[cytochrome c] + NH4(+) + 2 H2O = 6 Fe(II)-[cytochrome c] + nitrite + 8 H(+). The protein operates within nitrogen metabolism; nitrate reduction (assimilation). Catalyzes the reduction of nitrite to ammonia, consuming six electrons in the process. The chain is Cytochrome c-552 from Maridesulfovibrio salexigens (strain ATCC 14822 / DSM 2638 / NCIMB 8403 / VKM B-1763) (Desulfovibrio salexigens).